The sequence spans 110 residues: ATP-dependent Clp protease adapter protein ClpS 2 (110 aa).

The segment at 1 to 24 (MSNDENRSGSPTGPNTSVITKVKP) is disordered. A compositionally biased stretch (polar residues) spans 8 to 19 (SGSPTGPNTSVI).

The protein belongs to the ClpS family. Binds to the N-terminal domain of the chaperone ClpA.

Its function is as follows. Involved in the modulation of the specificity of the ClpAP-mediated ATP-dependent protein degradation. The chain is ATP-dependent Clp protease adapter protein ClpS 2 from Bradyrhizobium diazoefficiens (strain JCM 10833 / BCRC 13528 / IAM 13628 / NBRC 14792 / USDA 110).